The primary structure comprises 231 residues: Extracellular deoxyribonuclease (231 aa).

Residues 1–20 (MMIFRFVTTLAASLPLLTFA) form the signal peptide.

Belongs to the EndA/NucM nuclease family.

It localises to the secreted. The protein is Extracellular deoxyribonuclease (dns) of Vibrio cholerae serotype O1 (strain ATCC 39315 / El Tor Inaba N16961).